Here is a 141-residue protein sequence, read N- to C-terminus: Hemoglobin subunit alpha-1/2 (141 aa).

One can recognise a Globin domain in the interval 1 to 141; sequence VLSPADKKNV…VSTVLTSKYR (141 aa). Ser-3 carries the post-translational modification Phosphoserine. N6-succinyllysine occurs at positions 7 and 11. At Lys-16 the chain carries N6-acetyllysine; alternate. Lys-16 bears the N6-succinyllysine; alternate mark. Position 24 is a phosphotyrosine (Tyr-24). The residue at position 35 (Ser-35) is a Phosphoserine. The residue at position 40 (Lys-40) is an N6-succinyllysine. Ser-49 carries the phosphoserine modification. His-58 contacts O2. His-87 contributes to the heme b binding site. Position 102 is a phosphoserine (Ser-102). At Thr-108 the chain carries Phosphothreonine. A phosphoserine mark is found at Ser-124 and Ser-131. Thr-134 and Thr-137 each carry phosphothreonine. Ser-138 is subject to Phosphoserine.

Belongs to the globin family. As to quaternary structure, heterotetramer of two alpha chains and two beta chains. As to expression, red blood cells.

Involved in oxygen transport from the lung to the various peripheral tissues. This Mandrillus sphinx (Mandrill) protein is Hemoglobin subunit alpha-1/2.